A 966-amino-acid polypeptide reads, in one-letter code: DNA mismatch repair protein MutS (966 aa).

Residue 709–716 (GPNMAGKS) coordinates ATP. Residues 894-914 (EGQRPPSSPAQPPAPPAPVVV) form a disordered region. Positions 899–912 (PSSPAQPPAPPAPV) are enriched in pro residues.

Belongs to the DNA mismatch repair MutS family.

Its function is as follows. This protein is involved in the repair of mismatches in DNA. It is possible that it carries out the mismatch recognition step. This protein has a weak ATPase activity. The polypeptide is DNA mismatch repair protein MutS (Chloroflexus aurantiacus (strain ATCC 29366 / DSM 635 / J-10-fl)).